Here is a 268-residue protein sequence, read N- to C-terminus: Tryptophan synthase alpha chain (268 aa).

Active-site proton acceptor residues include Glu-49 and Asp-60.

It belongs to the TrpA family. Tetramer of two alpha and two beta chains.

It catalyses the reaction (1S,2R)-1-C-(indol-3-yl)glycerol 3-phosphate + L-serine = D-glyceraldehyde 3-phosphate + L-tryptophan + H2O. Its pathway is amino-acid biosynthesis; L-tryptophan biosynthesis; L-tryptophan from chorismate: step 5/5. In terms of biological role, the alpha subunit is responsible for the aldol cleavage of indoleglycerol phosphate to indole and glyceraldehyde 3-phosphate. This Escherichia coli O127:H6 (strain E2348/69 / EPEC) protein is Tryptophan synthase alpha chain.